We begin with the raw amino-acid sequence, 907 residues long: Protein translocase subunit SecA (907 aa).

ATP contacts are provided by residues Gln-86, 104–108 (GEGKT), and Asp-511. 2 stretches are compositionally biased toward basic and acidic residues: residues 838 to 856 (AQEE…HESV) and 869 to 888 (EEAP…KRND). The tract at residues 838–907 (AQEEWKESMS…YKQCHGKVVD (70 aa)) is disordered. Residues Cys-890, Cys-892, Cys-901, and His-902 each contribute to the Zn(2+) site. The segment covering 896-907 (KKYKQCHGKVVD) has biased composition (basic residues).

The protein belongs to the SecA family. Monomer and homodimer. Part of the essential Sec protein translocation apparatus which comprises SecA, SecYEG and auxiliary proteins SecDF-YajC and YidC. Requires Zn(2+) as cofactor.

Its subcellular location is the cell inner membrane. It localises to the cytoplasm. It carries out the reaction ATP + H2O + cellular proteinSide 1 = ADP + phosphate + cellular proteinSide 2.. Its function is as follows. Part of the Sec protein translocase complex. Interacts with the SecYEG preprotein conducting channel. Has a central role in coupling the hydrolysis of ATP to the transfer of proteins into and across the cell membrane, serving both as a receptor for the preprotein-SecB complex and as an ATP-driven molecular motor driving the stepwise translocation of polypeptide chains across the membrane. The protein is Protein translocase subunit SecA of Francisella philomiragia subsp. philomiragia (strain ATCC 25017 / CCUG 19701 / FSC 153 / O#319-036).